We begin with the raw amino-acid sequence, 90 residues long: MGPSQLVRAPRPPGLTSPYRRPGMGGPRRRCPSMFKCSRRTYRQKPRGPTATNPASEATNISDTDTTTSVLILSPRVLRFLCQPGGFLVL.

Residues 1 to 63 (MGPSQLVRAP…PASEATNISD (63 aa)) form a disordered region. Basic residues predominate over residues 27–46 (PRRRCPSMFKCSRRTYRQKP). The segment covering 50 to 63 (TATNPASEATNISD) has biased composition (polar residues).

This is PIK3R3 upstream open reading frame protein from Mus musculus (Mouse).